The sequence spans 97 residues: uncharacterized protein (97 aa).

Residues M1–D24 are compositionally biased toward basic and acidic residues. Residues M1 to D97 are disordered. Over residues S31–Q43 the composition is skewed to low complexity. Residues T44–T53 are compositionally biased toward basic and acidic residues.

This is an uncharacterized protein from Bacillus subtilis (strain 168).